The following is a 67-amino-acid chain: Small ribosomal subunit protein eS17 (67 aa).

The protein belongs to the eukaryotic ribosomal protein eS17 family. In terms of assembly, part of the 30S ribosomal subunit.

The protein is Small ribosomal subunit protein eS17 of Thermococcus kodakarensis (strain ATCC BAA-918 / JCM 12380 / KOD1) (Pyrococcus kodakaraensis (strain KOD1)).